The chain runs to 188 residues: Trafficking protein particle complex subunit 5 (188 aa).

The residue at position 10 (S10) is a Phosphoserine.

Belongs to the TRAPP small subunits family. BET3 subfamily. In terms of assembly, component of the multisubunit TRAPP (transport protein particle) complex, which includes at least TRAPPC2, TRAPPC2L, TRAPPC3, TRAPPC3L, TRAPPC4, TRAPPC5, TRAPPC8, TRAPPC9, TRAPPC10, TRAPPC11 and TRAPPC12.

The protein resides in the golgi apparatus. Its subcellular location is the cis-Golgi network. It is found in the endoplasmic reticulum. Its function is as follows. May play a role in vesicular transport from endoplasmic reticulum to Golgi. In Bos taurus (Bovine), this protein is Trafficking protein particle complex subunit 5 (TRAPPC5).